The sequence spans 298 residues: Bifunctional protein FolD (298 aa).

Residues 167-169, S192, and I233 contribute to the NADP(+) site; that span reads GRS.

This sequence belongs to the tetrahydrofolate dehydrogenase/cyclohydrolase family. Homodimer.

It catalyses the reaction (6R)-5,10-methylene-5,6,7,8-tetrahydrofolate + NADP(+) = (6R)-5,10-methenyltetrahydrofolate + NADPH. The enzyme catalyses (6R)-5,10-methenyltetrahydrofolate + H2O = (6R)-10-formyltetrahydrofolate + H(+). The protein operates within one-carbon metabolism; tetrahydrofolate interconversion. In terms of biological role, catalyzes the oxidation of 5,10-methylenetetrahydrofolate to 5,10-methenyltetrahydrofolate and then the hydrolysis of 5,10-methenyltetrahydrofolate to 10-formyltetrahydrofolate. The polypeptide is Bifunctional protein FolD (Caulobacter sp. (strain K31)).